The chain runs to 564 residues: Dihydroxy-acid dehydratase (564 aa).

A Mg(2+)-binding site is contributed by Asp78. Cys119 contacts [2Fe-2S] cluster. Mg(2+) is bound by residues Asp120 and Lys121. Position 121 is an N6-carboxylysine (Lys121). [2Fe-2S] cluster is bound at residue Cys192. Glu451 lines the Mg(2+) pocket. The active-site Proton acceptor is Ser477.

The protein belongs to the IlvD/Edd family. As to quaternary structure, homodimer. [2Fe-2S] cluster is required as a cofactor. The cofactor is Mg(2+).

The enzyme catalyses (2R)-2,3-dihydroxy-3-methylbutanoate = 3-methyl-2-oxobutanoate + H2O. It carries out the reaction (2R,3R)-2,3-dihydroxy-3-methylpentanoate = (S)-3-methyl-2-oxopentanoate + H2O. Its pathway is amino-acid biosynthesis; L-isoleucine biosynthesis; L-isoleucine from 2-oxobutanoate: step 3/4. It participates in amino-acid biosynthesis; L-valine biosynthesis; L-valine from pyruvate: step 3/4. Functions in the biosynthesis of branched-chain amino acids. Catalyzes the dehydration of (2R,3R)-2,3-dihydroxy-3-methylpentanoate (2,3-dihydroxy-3-methylvalerate) into 2-oxo-3-methylpentanoate (2-oxo-3-methylvalerate) and of (2R)-2,3-dihydroxy-3-methylbutanoate (2,3-dihydroxyisovalerate) into 2-oxo-3-methylbutanoate (2-oxoisovalerate), the penultimate precursor to L-isoleucine and L-valine, respectively. The sequence is that of Dihydroxy-acid dehydratase from Nitratiruptor sp. (strain SB155-2).